Reading from the N-terminus, the 151-residue chain is Histone H2B.1 (151 aa).

2 stretches are compositionally biased toward basic and acidic residues: residues 1–28 (MAPK…EKAP) and 36–51 (EKRL…GEGK). A disordered region spans residues 1 to 58 (MAPKAEKKPAAKKPAEEEPATEKVEKAPAGKKPKAEKRLPAGKSKEGGEGKKGKKKAK). An N6-acetyllysine mark is found at Lys-7 and Lys-37. Lys-147 is covalently cross-linked (Glycyl lysine isopeptide (Lys-Gly) (interchain with G-Cter in ubiquitin)).

This sequence belongs to the histone H2B family. The nucleosome is a histone octamer containing two molecules each of H2A, H2B, H3 and H4 assembled in one H3-H4 heterotetramer and two H2A-H2B heterodimers. The octamer wraps approximately 147 bp of DNA. Post-translationally, can be acetylated to form H2BK6ac and H2BK33ac. Monoubiquitinated to form H2BK143ub1; may give a specific tag for epigenetic transcriptional activation.

The protein localises to the nucleus. The protein resides in the chromosome. Its function is as follows. Core component of nucleosome. Nucleosomes wrap and compact DNA into chromatin, limiting DNA accessibility to the cellular machineries which require DNA as a template. Histones thereby play a central role in transcription regulation, DNA repair, DNA replication and chromosomal stability. DNA accessibility is regulated via a complex set of post-translational modifications of histones, also called histone code, and nucleosome remodeling. This chain is Histone H2B.1, found in Zea mays (Maize).